The chain runs to 592 residues: Delta-like protein 3 (592 aa).

The signal sequence occupies residues 1-32 (MVSLQVSPLSQTLILAFLLPQALPAGVFELQI). At 33–490 (HSFGPGPGLG…LRQADPQRFL (458 aa)) the chain is on the extracellular side. The DSL domain occupies 174–213 (ARCEPPAVGAACARLCRSRSAPSRCGPGLRPCTPFPDECE). EGF-like domains lie at 214-247 (APSV…PLCT), 272-308 (GPGP…LRCE), 310-349 (SGVT…SNCE), 351-387 (RVDR…PRCE), 389-425 (DLDD…RDCR), and 427-463 (RADP…VRCE). Disulfide bonds link Cys-218–Cys-229, Cys-222–Cys-235, Cys-237–Cys-246, Cys-276–Cys-287, Cys-281–Cys-296, Cys-298–Cys-307, Cys-314–Cys-325, Cys-319–Cys-337, Cys-339–Cys-348, Cys-355–Cys-366, Cys-360–Cys-375, Cys-377–Cys-386, Cys-393–Cys-404, Cys-398–Cys-413, Cys-415–Cys-424, Cys-431–Cys-442, Cys-436–Cys-451, and Cys-453–Cys-462. A helical membrane pass occupies residues 491 to 511 (LPPALGLLVAAGLAGAALLVI). The Cytoplasmic segment spans residues 512 to 592 (HVRRRGPGQD…REDWLIQVLF (81 aa)). Residues 548–567 (QDGAGDGPSSSADWNHPEDG) form a disordered region.

In terms of assembly, can bind and activate Notch-1 or another Notch receptor. In terms of processing, ubiquitinated by MIB (MIB1 or MIB2), leading to its endocytosis and subsequent degradation. Predominantly expressed in the neuroectoderm and paraxial mesoderm during embryogenesis.

The protein localises to the membrane. Its function is as follows. Inhibits primary neurogenesis. May be required to divert neurons along a specific differentiation pathway. Plays a role in the formation of somite boundaries during segmentation of the paraxial mesoderm. The polypeptide is Delta-like protein 3 (Dll3) (Mus musculus (Mouse)).